The chain runs to 729 residues: Elongation factor 2 (729 aa).

The region spanning 19 to 262 (EQIRNIAIAA…MVCEHFPNPV (244 aa)) is the tr-type G domain. Residues 28–35 (AHVDHGKT), 94–98 (DTPGH), and 148–151 (NKVD) each bind GTP. A Diphthamide modification is found at His-597.

The protein belongs to the TRAFAC class translation factor GTPase superfamily. Classic translation factor GTPase family. EF-G/EF-2 subfamily.

It is found in the cytoplasm. Its function is as follows. Catalyzes the GTP-dependent ribosomal translocation step during translation elongation. During this step, the ribosome changes from the pre-translocational (PRE) to the post-translocational (POST) state as the newly formed A-site-bound peptidyl-tRNA and P-site-bound deacylated tRNA move to the P and E sites, respectively. Catalyzes the coordinated movement of the two tRNA molecules, the mRNA and conformational changes in the ribosome. The sequence is that of Elongation factor 2 from Natronomonas pharaonis (strain ATCC 35678 / DSM 2160 / CIP 103997 / JCM 8858 / NBRC 14720 / NCIMB 2260 / Gabara) (Halobacterium pharaonis).